Here is a 669-residue protein sequence, read N- to C-terminus: Probable serine/threonine-protein kinase DDB_G0291918 (669 aa).

The Protein kinase domain maps to 13–360 (YNNIKELGRG…LKETLNHPFL (348 aa)). ATP-binding positions include 19 to 27 (LGRGVSGVV) and Lys42. Residue Asp141 is the Proton acceptor of the active site. Over residues 396 to 405 (QNQQQQQQQQ) the composition is skewed to low complexity. Disordered regions lie at residues 396 to 518 (QNQQ…APTF) and 530 to 550 (FPKL…MNWR). Polar residues predominate over residues 406-418 (KSFSTSSLPQVNH). Composition is skewed to low complexity over residues 419–449 (NNDT…NNNN) and 457–494 (QSNN…SSTD).

The protein belongs to the protein kinase superfamily. Ser/Thr protein kinase family.

It carries out the reaction L-seryl-[protein] + ATP = O-phospho-L-seryl-[protein] + ADP + H(+). It catalyses the reaction L-threonyl-[protein] + ATP = O-phospho-L-threonyl-[protein] + ADP + H(+). This chain is Probable serine/threonine-protein kinase DDB_G0291918, found in Dictyostelium discoideum (Social amoeba).